The sequence spans 288 residues: Nucleotide-binding protein AHA_3920 (288 aa).

An ATP-binding site is contributed by Gly-8–Thr-15. Asp-56–Asn-59 is a GTP binding site.

It belongs to the RapZ-like family.

Functionally, displays ATPase and GTPase activities. This chain is Nucleotide-binding protein AHA_3920, found in Aeromonas hydrophila subsp. hydrophila (strain ATCC 7966 / DSM 30187 / BCRC 13018 / CCUG 14551 / JCM 1027 / KCTC 2358 / NCIMB 9240 / NCTC 8049).